The sequence spans 307 residues: UDP-3-O-acyl-N-acetylglucosamine deacetylase (307 aa).

Zn(2+)-binding residues include histidine 78, histidine 241, and aspartate 245. The active-site Proton donor is histidine 268.

The protein belongs to the LpxC family. Zn(2+) serves as cofactor.

The enzyme catalyses a UDP-3-O-[(3R)-3-hydroxyacyl]-N-acetyl-alpha-D-glucosamine + H2O = a UDP-3-O-[(3R)-3-hydroxyacyl]-alpha-D-glucosamine + acetate. Its pathway is glycolipid biosynthesis; lipid IV(A) biosynthesis; lipid IV(A) from (3R)-3-hydroxytetradecanoyl-[acyl-carrier-protein] and UDP-N-acetyl-alpha-D-glucosamine: step 2/6. Functionally, catalyzes the hydrolysis of UDP-3-O-myristoyl-N-acetylglucosamine to form UDP-3-O-myristoylglucosamine and acetate, the committed step in lipid A biosynthesis. This chain is UDP-3-O-acyl-N-acetylglucosamine deacetylase, found in Verminephrobacter eiseniae (strain EF01-2).